The following is a 76-amino-acid chain: Translation initiation factor IF-1 (76 aa).

The region spanning Met-1–Lys-72 is the S1-like domain.

The protein belongs to the IF-1 family. As to quaternary structure, component of the 30S ribosomal translation pre-initiation complex which assembles on the 30S ribosome in the order IF-2 and IF-3, IF-1 and N-formylmethionyl-tRNA(fMet); mRNA recruitment can occur at any time during PIC assembly.

Its subcellular location is the cytoplasm. Its function is as follows. One of the essential components for the initiation of protein synthesis. Stabilizes the binding of IF-2 and IF-3 on the 30S subunit to which N-formylmethionyl-tRNA(fMet) subsequently binds. Helps modulate mRNA selection, yielding the 30S pre-initiation complex (PIC). Upon addition of the 50S ribosomal subunit IF-1, IF-2 and IF-3 are released leaving the mature 70S translation initiation complex. This is Translation initiation factor IF-1 from Petrotoga mobilis (strain DSM 10674 / SJ95).